The chain runs to 282 residues: 3-oxoadipate CoA-transferase subunit A (282 aa).

This sequence belongs to the 3-oxoacid CoA-transferase subunit A family. Heterotetramer composed of 2 A and 2 B subunits.

It catalyses the reaction 3-oxoadipate + succinyl-CoA = 3-oxoadipyl-CoA + succinate. It participates in aromatic compound metabolism; beta-ketoadipate pathway; acetyl-CoA and succinyl-CoA from 3-oxoadipate: step 1/2. Functionally, catalyzes the CoA transfer from succinate to 3-oxoadipate (beta-ketoadipate). The sequence is that of 3-oxoadipate CoA-transferase subunit A (catI) from Pseudomonas knackmussii (strain DSM 6978 / CCUG 54928 / LMG 23759 / B13).